Consider the following 562-residue polypeptide: Formate--tetrahydrofolate ligase (562 aa).

ATP is bound at residue 71-78 (TPAGEGKS).

Belongs to the formate--tetrahydrofolate ligase family.

It carries out the reaction (6S)-5,6,7,8-tetrahydrofolate + formate + ATP = (6R)-10-formyltetrahydrofolate + ADP + phosphate. Its pathway is one-carbon metabolism; tetrahydrofolate interconversion. The sequence is that of Formate--tetrahydrofolate ligase from Bacillus cereus (strain Q1).